We begin with the raw amino-acid sequence, 511 residues long: 2-isopropylmalate synthase (511 aa).

One can recognise a Pyruvate carboxyltransferase domain in the interval 5–267; the sequence is LFIFDTTLRD…DTRIDATQIV (263 aa). 4 residues coordinate Mn(2+): aspartate 14, histidine 202, histidine 204, and asparagine 238. Residues 393–511 form a regulatory domain region; that stretch reads KLLSMKVCSE…SKRERAHPQV (119 aa).

The protein belongs to the alpha-IPM synthase/homocitrate synthase family. LeuA type 1 subfamily. In terms of assembly, homodimer. It depends on Mn(2+) as a cofactor.

It localises to the cytoplasm. The enzyme catalyses 3-methyl-2-oxobutanoate + acetyl-CoA + H2O = (2S)-2-isopropylmalate + CoA + H(+). Its pathway is amino-acid biosynthesis; L-leucine biosynthesis; L-leucine from 3-methyl-2-oxobutanoate: step 1/4. In terms of biological role, catalyzes the condensation of the acetyl group of acetyl-CoA with 3-methyl-2-oxobutanoate (2-ketoisovalerate) to form 3-carboxy-3-hydroxy-4-methylpentanoate (2-isopropylmalate). The protein is 2-isopropylmalate synthase of Thiobacillus denitrificans (strain ATCC 25259 / T1).